The chain runs to 106 residues: Large ribosomal subunit protein eL42 (106 aa).

Over residues 1–29 the composition is skewed to basic residues; the sequence is MVNIPKTRRTYCKGKACRKHTPHKVTQYK. Residues 1 to 56 are disordered; the sequence is MVNIPKTRRTYCKGKACRKHTPHKVTQYKKGKDSLSAQGKRRYDRKQSGYGGQTKP.

It belongs to the eukaryotic ribosomal protein eL42 family.

In Cryptococcus neoformans var. neoformans serotype D (strain B-3501A) (Filobasidiella neoformans), this protein is Large ribosomal subunit protein eL42 (RPL44).